The sequence spans 356 residues: D-alanine--D-alanine ligase (356 aa).

Residues 134–339 (KQLFEHRGLP…YPELITKLIE (206 aa)) form the ATP-grasp domain. 167–222 (NDKLNYPVFVKPANLGSSVGISKCNNEAELKEGIKEAFQFDRKLVIEQGVNAREIE) provides a ligand contact to ATP. Positions 293, 306, and 308 each coordinate Mg(2+).

This sequence belongs to the D-alanine--D-alanine ligase family. It depends on Mg(2+) as a cofactor. The cofactor is Mn(2+).

It is found in the cytoplasm. The enzyme catalyses 2 D-alanine + ATP = D-alanyl-D-alanine + ADP + phosphate + H(+). It functions in the pathway cell wall biogenesis; peptidoglycan biosynthesis. Cell wall formation. This Staphylococcus aureus (strain MSSA476) protein is D-alanine--D-alanine ligase.